Here is a 333-residue protein sequence, read N- to C-terminus: Anthranilate phosphoribosyltransferase (333 aa).

Residues Gly-80, 83-84, Thr-88, 90-93, 108-116, and Ser-120 contribute to the 5-phospho-alpha-D-ribose 1-diphosphate site; these read GD, NLST, and KHGNRSASG. An anthranilate-binding site is contributed by Gly-80. Ser-92 is a binding site for Mg(2+). Asn-111 provides a ligand contact to anthranilate. Arg-166 serves as a coordination point for anthranilate. 2 residues coordinate Mg(2+): Asp-224 and Glu-225.

It belongs to the anthranilate phosphoribosyltransferase family. Homodimer. The cofactor is Mg(2+).

The enzyme catalyses N-(5-phospho-beta-D-ribosyl)anthranilate + diphosphate = 5-phospho-alpha-D-ribose 1-diphosphate + anthranilate. Its pathway is amino-acid biosynthesis; L-tryptophan biosynthesis; L-tryptophan from chorismate: step 2/5. Functionally, catalyzes the transfer of the phosphoribosyl group of 5-phosphorylribose-1-pyrophosphate (PRPP) to anthranilate to yield N-(5'-phosphoribosyl)-anthranilate (PRA). This Pyrobaculum aerophilum (strain ATCC 51768 / DSM 7523 / JCM 9630 / CIP 104966 / NBRC 100827 / IM2) protein is Anthranilate phosphoribosyltransferase.